Consider the following 477-residue polypeptide: Glutamate--tRNA ligase 2 (477 aa).

The 'HIGH' region motif lies at 9 to 19 (PSPTGFLHIGG). Residues 238 to 242 (KLSKR) carry the 'KMSKS' region motif. Lys-241 contributes to the ATP binding site.

It belongs to the class-I aminoacyl-tRNA synthetase family. Glutamate--tRNA ligase type 1 subfamily. As to quaternary structure, monomer.

The protein localises to the cytoplasm. The enzyme catalyses tRNA(Glu) + L-glutamate + ATP = L-glutamyl-tRNA(Glu) + AMP + diphosphate. In terms of biological role, catalyzes the attachment of glutamate to tRNA(Glu) in a two-step reaction: glutamate is first activated by ATP to form Glu-AMP and then transferred to the acceptor end of tRNA(Glu). In Paramagnetospirillum magneticum (strain ATCC 700264 / AMB-1) (Magnetospirillum magneticum), this protein is Glutamate--tRNA ligase 2.